Consider the following 441-residue polypeptide: Serine/threonine-protein kinase prk-2 (441 aa).

Residues 31 to 285 enclose the Protein kinase domain; it reads YKLKAELGRG…LEAILNHPWV (255 aa). ATP-binding positions include 37–45 and lysine 60; that span reads LGRGGFGVV. The Proton acceptor role is filled by aspartate 158. The segment at 301-364 is disordered; it reads QKKTSESSDD…NQKKPNHKEF (64 aa). Residues 303 to 320 are compositionally biased toward basic and acidic residues; that stretch reads KTSESSDDHHSETLGDHS. Over residues 328 to 338 the composition is skewed to polar residues; that stretch reads PPTSSVSQQPG.

This sequence belongs to the protein kinase superfamily. Ser/Thr protein kinase family. PIM subfamily. Mg(2+) serves as cofactor.

It catalyses the reaction L-seryl-[protein] + ATP = O-phospho-L-seryl-[protein] + ADP + H(+). The enzyme catalyses L-threonyl-[protein] + ATP = O-phospho-L-threonyl-[protein] + ADP + H(+). Functionally, involved in the negative regulation of synaptic differentiation in PLM neurons. This chain is Serine/threonine-protein kinase prk-2, found in Caenorhabditis elegans.